Consider the following 988-residue polypeptide: Vacuolar sorting protein 18 (988 aa).

The stretch at 589–749 (NKNLNPRRLI…VVKQEKGAKR (161 aa)) is one CHCR repeat. Positions 785-819 (KEAICSSLEDYNKQIEQLKEEMNDATRGADNIRND) form a coiled coil. Residues 836–886 (CGVCKRKILMMSGDFRMAQGYSSAGPLAPFYVFPCGHSFHAQCLITHVTSC) form an RING-type; degenerate zinc finger.

This sequence belongs to the VPS18 family. As to quaternary structure, core component of at least two putative endosomal tethering complexes, the homotypic fusion and vacuole protein sorting (HOPS) complex and the class C core vacuole/endosome tethering (CORVET) complex. Their common core is composed of the class C Vps proteins VPS11, VCL1, VPS18 and VPS33, which in HOPS further associates with VPS39 and VPS41 and in CORVET with VPS3.

It localises to the endosome membrane. The protein localises to the vacuole membrane. The protein resides in the cytoplasm. Essential protein required during embryogenesis. Believed to act as a core component of the putative HOPS endosomal tethering complex and of the class C core vacuole/endosome tethering (CORVET) complex. CORVET is required for vacuolar transport of SYP22. HOPS is required for the central vacuole formation. Involved in root development. Plays a role in vesicle-mediated protein trafficking to lysosomal compartments including the endocytic membrane transport pathways. The polypeptide is Vacuolar sorting protein 18 (Arabidopsis thaliana (Mouse-ear cress)).